The primary structure comprises 501 residues: MPQTPPRSGGYRSGKQSYVDESLFGGSKRTGAAQVETLDSLKLTAPTRTISPKDRDVVTLTKGDLTRMLKASPIMTAEDVAAAKREAEAKREQLQAVSKARKEKMLKLEEEAKKQAPPTETEILQRQLNDATRSRATHMMLEQKDPVKHMNQMMLYSKCVTIRDAQIEEKKQMLAEEEEEQRRLDLMMEIERVKALEQYEARERQRVEERRKGAAVLSEQIKERERERIRQEELRDQERLQMLREIERLKEEEMQAQIEKKIQAKQLMEEVAAANSEQIKRKEGMKVREKEEDLRIADYILQKEMREQSLAAEKERIAKEKEMETARLRAMQERAADKQSELDELRARRYQEAKEREWRQKERAYAERQASMQQELANARTAQQASKLKQKAEMARLEHDEFMRVLDVNRAKEYDELQQTVNAMTLNSKYKEELLAQIQANEERRKRERSHYLEEGARLREAAEKERQLLLQIKDRKLGELESAGVPGKYRAELEKMKIRS.

Residues 75-114 are a coiled coil; sequence MTAEDVAAAKREAEAKREQLQAVSKARKEKMLKLEEEAKK.

The protein belongs to the CFAP45 family.

Its subcellular location is the cell projection. The protein localises to the cilium. It localises to the flagellum. The chain is Cilia- and flagella-associated protein 45 from Chlamydomonas reinhardtii (Chlamydomonas smithii).